The sequence spans 222 residues: Putative thymidylate synthase (222 aa).

The active site involves Cys139.

This sequence belongs to the thymidylate synthase family. Archaeal-type ThyA subfamily. As to quaternary structure, monomer.

Its subcellular location is the cytoplasm. The protein operates within pyrimidine metabolism; dTTP biosynthesis. Functionally, may catalyze the biosynthesis of dTMP using an unknown cosubstrate. The polypeptide is Putative thymidylate synthase (Methanocaldococcus jannaschii (strain ATCC 43067 / DSM 2661 / JAL-1 / JCM 10045 / NBRC 100440) (Methanococcus jannaschii)).